Consider the following 121-residue polypeptide: Large ribosomal subunit protein bL12 (121 aa).

This sequence belongs to the bacterial ribosomal protein bL12 family. As to quaternary structure, homodimer. Part of the ribosomal stalk of the 50S ribosomal subunit. Forms a multimeric L10(L12)X complex, where L10 forms an elongated spine to which 2 to 4 L12 dimers bind in a sequential fashion. Binds GTP-bound translation factors.

Forms part of the ribosomal stalk which helps the ribosome interact with GTP-bound translation factors. Is thus essential for accurate translation. This is Large ribosomal subunit protein bL12 from Vibrio cholerae serotype O1 (strain ATCC 39541 / Classical Ogawa 395 / O395).